The chain runs to 272 residues: Tryptophan synthase alpha chain (272 aa).

Residues glutamate 49 and aspartate 60 each act as proton acceptor in the active site.

Belongs to the TrpA family. As to quaternary structure, tetramer of two alpha and two beta chains.

It carries out the reaction (1S,2R)-1-C-(indol-3-yl)glycerol 3-phosphate + L-serine = D-glyceraldehyde 3-phosphate + L-tryptophan + H2O. It functions in the pathway amino-acid biosynthesis; L-tryptophan biosynthesis; L-tryptophan from chorismate: step 5/5. Its function is as follows. The alpha subunit is responsible for the aldol cleavage of indoleglycerol phosphate to indole and glyceraldehyde 3-phosphate. This chain is Tryptophan synthase alpha chain, found in Polaromonas naphthalenivorans (strain CJ2).